The chain runs to 227 residues: ATP synthase F(0) complex subunit a (227 aa).

A run of 6 helical transmembrane segments spans residues 14 to 34 (FLGI…FPSP), 69 to 89 (WAMI…LGLL), 98 to 118 (QLSM…LIGM), 139 to 159 (IPIL…ALGV), 165 to 185 (LTAG…MLSI), and 189 to 209 (IATL…AVAM).

Belongs to the ATPase A chain family. In terms of assembly, component of the ATP synthase complex composed at least of ATP5F1A/subunit alpha, ATP5F1B/subunit beta, ATP5MC1/subunit c (homooctomer), MT-ATP6/subunit a, MT-ATP8/subunit 8, ATP5ME/subunit e, ATP5MF/subunit f, ATP5MG/subunit g, ATP5MK/subunit k, ATP5MJ/subunit j, ATP5F1C/subunit gamma, ATP5F1D/subunit delta, ATP5F1E/subunit epsilon, ATP5PF/subunit F6, ATP5PB/subunit b, ATP5PD/subunit d, ATP5PO/subunit OSCP. ATP synthase complex consists of a soluble F(1) head domain (subunits alpha(3) and beta(3)) - the catalytic core - and a membrane F(0) domain - the membrane proton channel (subunits c, a, 8, e, f, g, k and j). These two domains are linked by a central stalk (subunits gamma, delta, and epsilon) rotating inside the F1 region and a stationary peripheral stalk (subunits F6, b, d, and OSCP). Interacts with DNAJC30; interaction is direct.

The protein localises to the mitochondrion inner membrane. The enzyme catalyses H(+)(in) = H(+)(out). In terms of biological role, subunit a, of the mitochondrial membrane ATP synthase complex (F(1)F(0) ATP synthase or Complex V) that produces ATP from ADP in the presence of a proton gradient across the membrane which is generated by electron transport complexes of the respiratory chain. ATP synthase complex consist of a soluble F(1) head domain - the catalytic core - and a membrane F(1) domain - the membrane proton channel. These two domains are linked by a central stalk rotating inside the F(1) region and a stationary peripheral stalk. During catalysis, ATP synthesis in the catalytic domain of F(1) is coupled via a rotary mechanism of the central stalk subunits to proton translocation. With the subunit c (ATP5MC1), forms the proton-conducting channel in the F(0) domain, that contains two crucial half-channels (inlet and outlet) that facilitate proton movement from the mitochondrial intermembrane space (IMS) into the matrix. Protons are taken up via the inlet half-channel and released through the outlet half-channel, following a Grotthuss mechanism. This is ATP synthase F(0) complex subunit a from Polypterus ornatipinnis (Ornate bichir).